Consider the following 294-residue polypeptide: Cyclin-dependent kinase A-1 (294 aa).

A Protein kinase domain is found at 4-287 (YEKVEKIGEG…ARAALEHEYF (284 aa)). Residues 10-18 (IGEGTYGVV) and K33 contribute to the ATP site. Y15 is subject to Phosphotyrosine. The Proton acceptor role is filled by D127. At T161 the chain carries Phosphothreonine.

Belongs to the protein kinase superfamily. CMGC Ser/Thr protein kinase family. CDC2/CDKX subfamily. Interacts with CDT1A, CYCA2-3, CYCD2-1, CYCD3-1, CYCD4-1, CYCD4-2, CYCH1-1, CYCU1-1, CYCU2-1, CYCU2-2, CYCU3-1, CYCU4-1, CYCU4-2, CYCU4-3, CKS1, KRP2/ICK2, KRP3/ICK6, KRP4/ICK7, KRP6/ICK4, KRP7/ICK5, and C-terminal domain of KRP1/ICK1. Interacts with WEE1 and TIF4A-1/EIF4A-1. Interacts with PAS2; when phosphorylated at Tyr-15. Interacts with SMR3, SMR4, SMR5, SMR6, SMR8 and At4g14310. Binds to CYCD3-2. Component of a DREAM-like complex which modulates a variety of developmentally regulated genes and of the mitotic genes in proliferating and differentiated cells. Interacts with MYB3R3 at later and with MYB3R4 at earlier stages of leaf development. May interact with SPCH. Post-translationally, phosphorylated at Tyr-15 by WEE1. Phosphorylation at Thr-161 is important for the kinase activity and substrate binding. Binding to the anti-phosphatase PAS2 prevents dephosphorylation. Expressed in roots, stems, flowers and siliques.

The protein localises to the cytoplasm. It localises to the nucleus. It catalyses the reaction L-seryl-[protein] + ATP = O-phospho-L-seryl-[protein] + ADP + H(+). It carries out the reaction L-threonyl-[protein] + ATP = O-phospho-L-threonyl-[protein] + ADP + H(+). The catalysed reaction is [DNA-directed RNA polymerase] + ATP = phospho-[DNA-directed RNA polymerase] + ADP + H(+). CDK kinase activated by CDKF-1. CDK kinase activity inhibited by KRP1/ICK1, KRP2/ICK2, KRP3/ICK6, KRP4/ICK7, KRP5/ICK3, KRP6/ICK4 and KRP7/ICK5. Down-regulated by phosphorylation by WEE1. Functionally, involved in the control of the cell cycle. Essential for both G1/S and G2/M (mitosis) phase transitions. Functions in cell morphogenesis as well as cell proliferation. Required for cell division (entry into mitosis) of the generative cell in male gametogenesis. Required to trigger guard mother cells (GMC) symmetric divisions at the late stage of stomatal development, probably via the regulation of G1 to S transition in the cell cycle. Required for the function of SPCH in entering the stomatal lineage. Promotes divisions in the guard cells (GCs) after the guard mother cells (GMC) symmetric division when in the presence of CYCD3-2 via the phosphorylation of SPCH. This Arabidopsis thaliana (Mouse-ear cress) protein is Cyclin-dependent kinase A-1.